Here is a 223-residue protein sequence, read N- to C-terminus: Ribonuclease HII (223 aa).

The RNase H type-2 domain occupies 32 to 223 (FHIAGVDEVG…LKGRFRDNMS (192 aa)). A divalent metal cation is bound by residues Asp-38, Glu-39, and Asp-130.

Belongs to the RNase HII family. The cofactor is Mn(2+). Mg(2+) is required as a cofactor.

It is found in the cytoplasm. The enzyme catalyses Endonucleolytic cleavage to 5'-phosphomonoester.. Its function is as follows. Endonuclease that specifically degrades the RNA of RNA-DNA hybrids. This is Ribonuclease HII from Bartonella quintana (strain Toulouse) (Rochalimaea quintana).